A 58-amino-acid chain; its full sequence is Large ribosomal subunit protein bL32 (58 aa).

Over residues 1 to 15 the composition is skewed to basic residues; the sequence is MAVPKKKTSKAKRNQ. Residues 1 to 23 form a disordered region; it reads MAVPKKKTSKAKRNQRSATWKGK.

Belongs to the bacterial ribosomal protein bL32 family.

The chain is Large ribosomal subunit protein bL32 from Parasynechococcus marenigrum (strain WH8102).